A 176-amino-acid polypeptide reads, in one-letter code: MIPAYIPNPAAALLGGGTPVDFGKCAKDGRRILGDGKTWRGLIGGIVVGIIFGLMQIFLYNYFNLEFLPKQTIITVCALATGALLGDMVKSYFKRRLGKDRGAKWPIADMYDMVVGSLVLMTLALLVTGNLNWFTENFDSVGFLIATIIAILILSPLLHRGTNIIGYLLGLKDVPW.

Transmembrane regions (helical) follow at residues 41–61 (GLIG…FLYN), 73–93 (IITV…KSYF), 114–134 (VVGS…LNWF), and 138–158 (FDSV…SPLL).

The protein belongs to the CDP-archaeol synthase family. Requires Mg(2+) as cofactor.

It localises to the cell membrane. It carries out the reaction 2,3-bis-O-(geranylgeranyl)-sn-glycerol 1-phosphate + CTP + H(+) = CDP-2,3-bis-O-(geranylgeranyl)-sn-glycerol + diphosphate. It functions in the pathway membrane lipid metabolism; glycerophospholipid metabolism. In terms of biological role, catalyzes the formation of CDP-2,3-bis-(O-geranylgeranyl)-sn-glycerol (CDP-archaeol) from 2,3-bis-(O-geranylgeranyl)-sn-glycerol 1-phosphate (DGGGP) and CTP. This reaction is the third ether-bond-formation step in the biosynthesis of archaeal membrane lipids. In Methanocorpusculum labreanum (strain ATCC 43576 / DSM 4855 / Z), this protein is CDP-archaeol synthase.